The following is a 400-amino-acid chain: 1-deoxy-D-xylulose 5-phosphate reductoisomerase (400 aa).

NADPH is bound by residues threonine 17, glycine 18, serine 19, isoleucine 20, and asparagine 131. Lysine 132 provides a ligand contact to 1-deoxy-D-xylulose 5-phosphate. Glutamate 133 provides a ligand contact to NADPH. Aspartate 157 lines the Mn(2+) pocket. 4 residues coordinate 1-deoxy-D-xylulose 5-phosphate: serine 158, glutamate 159, serine 188, and histidine 211. Residue glutamate 159 participates in Mn(2+) binding. Glycine 217 lines the NADPH pocket. 1-deoxy-D-xylulose 5-phosphate is bound by residues serine 224, asparagine 229, lysine 230, and glutamate 233. Residue glutamate 233 coordinates Mn(2+).

It belongs to the DXR family. It depends on Mg(2+) as a cofactor. The cofactor is Mn(2+).

The catalysed reaction is 2-C-methyl-D-erythritol 4-phosphate + NADP(+) = 1-deoxy-D-xylulose 5-phosphate + NADPH + H(+). It participates in isoprenoid biosynthesis; isopentenyl diphosphate biosynthesis via DXP pathway; isopentenyl diphosphate from 1-deoxy-D-xylulose 5-phosphate: step 1/6. Catalyzes the NADPH-dependent rearrangement and reduction of 1-deoxy-D-xylulose-5-phosphate (DXP) to 2-C-methyl-D-erythritol 4-phosphate (MEP). This Pseudomonas putida (strain ATCC 47054 / DSM 6125 / CFBP 8728 / NCIMB 11950 / KT2440) protein is 1-deoxy-D-xylulose 5-phosphate reductoisomerase.